Consider the following 202-residue polypeptide: Syndecan-4 (202 aa).

Positions 1–22 are cleaved as a signal peptide; that stretch reads MASPRLLALLLLLVGAFNAAAA. The Extracellular portion of the chain corresponds to 23–152; that stretch reads ESIRETEVIN…NIFERTEVLS (130 aa). Disordered stretches follow at residues 41 to 75 and 87 to 112; these read YFSGDLPDDEDVGGPGQEPDDFEWSGSGDLEGPED and VPLDNHIPERTGPGGRVPTEPKELEE. Serine 43 is a glycosylation site (O-linked (Xyl...) (glycosaminoglycan) serine). Acidic residues predominate over residues 46–63; the sequence is LPDDEDVGGPGQEPDDFE. O-linked (Xyl...) (glycosaminoglycan) serine glycans are attached at residues serine 65 and serine 67. Residues 153–173 form a helical membrane-spanning segment; the sequence is ALIVGGIVGILFAVFLVLLLV. Topologically, residues 174–202 are cytoplasmic; the sequence is YRMKKKDEGSYDLGKKPIYKKAPTNEFYA.

Belongs to the syndecan proteoglycan family. As to quaternary structure, homodimer. Interacts with CDCP1 and SDCBP. Interacts (via its cytoplasmic domain) with GIPC (via its PDZ domain). Interacts (via its cytoplasmic domain) with NUDT16L1. Interacts with DNM2; this interaction is markedly enhanced at focal ahesion site upon induction of focal adhesions and stress-fiber formation. Shedding, cleavage of the extracellular domain to release a soluble form, is enhanced by a number of factors such as heparanase, growth factor receptor action for example by thrombin or EGF. Physiological events such as stress or wound healing can activate the shedding. PMA-mediated shedding is inhibited by TIMP3. Post-translationally, O-glycosylated; contains both chondroitin sulfate and heparan sulfate. Ser-43, Ser-65 and Ser-67 can all be modified by either chondroitin sulfate or heparan sulfate, and the protein exists in forms that contain only chondroitin sulfate, only heparan sulfate and both chondroitin sulfate and heparan sulfate.

The protein resides in the membrane. Its subcellular location is the secreted. In terms of biological role, cell surface proteoglycan which regulates exosome biogenesis in concert with SDCBP and PDCD6IP. The sequence is that of Syndecan-4 from Sus scrofa (Pig).